A 289-amino-acid chain; its full sequence is Phosphatidylserine decarboxylase proenzyme (289 aa).

Active-site charge relay system; for autoendoproteolytic cleavage activity residues include aspartate 92, histidine 149, and serine 254. Serine 254 acts as the Schiff-base intermediate with substrate; via pyruvic acid; for decarboxylase activity in catalysis. Serine 254 carries the post-translational modification Pyruvic acid (Ser); by autocatalysis.

This sequence belongs to the phosphatidylserine decarboxylase family. PSD-B subfamily. Prokaryotic type I sub-subfamily. Heterodimer of a large membrane-associated beta subunit and a small pyruvoyl-containing alpha subunit. It depends on pyruvate as a cofactor. In terms of processing, is synthesized initially as an inactive proenzyme. Formation of the active enzyme involves a self-maturation process in which the active site pyruvoyl group is generated from an internal serine residue via an autocatalytic post-translational modification. Two non-identical subunits are generated from the proenzyme in this reaction, and the pyruvate is formed at the N-terminus of the alpha chain, which is derived from the carboxyl end of the proenzyme. The autoendoproteolytic cleavage occurs by a canonical serine protease mechanism, in which the side chain hydroxyl group of the serine supplies its oxygen atom to form the C-terminus of the beta chain, while the remainder of the serine residue undergoes an oxidative deamination to produce ammonia and the pyruvoyl prosthetic group on the alpha chain. During this reaction, the Ser that is part of the protease active site of the proenzyme becomes the pyruvoyl prosthetic group, which constitutes an essential element of the active site of the mature decarboxylase.

Its subcellular location is the cell membrane. The catalysed reaction is a 1,2-diacyl-sn-glycero-3-phospho-L-serine + H(+) = a 1,2-diacyl-sn-glycero-3-phosphoethanolamine + CO2. It functions in the pathway phospholipid metabolism; phosphatidylethanolamine biosynthesis; phosphatidylethanolamine from CDP-diacylglycerol: step 2/2. Functionally, catalyzes the formation of phosphatidylethanolamine (PtdEtn) from phosphatidylserine (PtdSer). This is Phosphatidylserine decarboxylase proenzyme from Pseudomonas paraeruginosa (strain DSM 24068 / PA7) (Pseudomonas aeruginosa (strain PA7)).